The sequence spans 223 residues: Small ribosomal subunit protein uS3 (223 aa).

The 69-residue stretch at 38-106 (IKKYLKSKLA…EVHLNIVEIR (69 aa)) folds into the KH type-2 domain.

The protein belongs to the universal ribosomal protein uS3 family. Part of the 30S ribosomal subunit. Forms a tight complex with proteins S10 and S14.

Binds the lower part of the 30S subunit head. Binds mRNA in the 70S ribosome, positioning it for translation. This Rhodospirillum rubrum (strain ATCC 11170 / ATH 1.1.1 / DSM 467 / LMG 4362 / NCIMB 8255 / S1) protein is Small ribosomal subunit protein uS3.